The chain runs to 588 residues: Solute carrier family 2, facilitated glucose transporter member 12 (588 aa).

At 1 to 28 (MLAHSTAQDLILQQRSSDDHPQTNPRQT) the chain is on the cytoplasmic side. The helical transmembrane segment at 29–49 (GCGAFIILSSVIAAISGLLVG) threads the bilayer. Topologically, residues 50–74 (YELGIISGALLQLQSLLELTCQQQE) are extracellular. Residues 75–95 (IVVSALLIGALVASLVGGCLI) form a helical membrane-spanning segment. Residues 96–103 (DLYGRRTT) are Cytoplasmic-facing. The chain crosses the membrane as a helical span at residues 104 to 124 (IIFTSILLVFANLLPVVVVSY). The Extracellular segment spans residues 125-131 (GSLIAGR). Residues 132–152 (IFIGVSISLSAIATCVYIAEL) form a helical membrane-spanning segment. Residues 153–158 (SPQDKR) are Cytoplasmic-facing. The helical transmembrane segment at 159 to 179 (GMLVSLNELMIVAGILLAYIC) threads the bilayer. Residues 180–191 (NYLFASVNNGWK) lie on the Extracellular side of the membrane. A helical membrane pass occupies residues 192–212 (YMFGLITPLAALQAVAMFFLP). At 213–272 (RSPRFLIMKGYDDAAGKVLQKLRATTDINEELTAIKSSIKAEYQYKFLDLFCSRDNMRAR) the chain is on the cytoplasmic side. A helical membrane pass occupies residues 273–293 (LLIGLTLSFFVQITGQPNILF). Over 294–311 (YASTVLKSVGFQSTEAAS) the chain is Extracellular. Residues 312 to 332 (LASTGIGVVKVVSTIPAIFLV) traverse the membrane as a helical segment. Over 333–339 (DKIGSKT) the chain is Cytoplasmic. Residues 340–360 (FLCIGSAVMAVSLVSVGLVSL) traverse the membrane as a helical segment. Over 361 to 459 (QLDVNYNNIC…IPEYMKWLCL (99 aa)) the chain is Extracellular. N-linked (GlcNAc...) asparagine glycosylation is found at Asn377, Asn395, and Asn419. Residues 460 to 480 (SSLLAFVAAFSIGLGPMAWLV) traverse the membrane as a helical segment. Over 481–492 (QSEIFPAGIKGR) the chain is Cytoplasmic. A helical transmembrane segment spans residues 493-513 (AFAITSSMNWGMNLLISLTFL). The Extracellular portion of the chain corresponds to 514–522 (TLTEMIGLP). Residues 523 to 543 (WMLFGYALMSIASLVFVIMFV) traverse the membrane as a helical segment. Over 544–588 (PNTKGRPLEEISKELANRSYMCNAVCHRRRSKKKLTPVALIQSPA) the chain is Cytoplasmic.

The protein belongs to the major facilitator superfamily. Sugar transporter (TC 2.A.1.1) family. Glucose transporter subfamily.

Its subcellular location is the cell membrane. It is found in the endomembrane system. The protein localises to the cytoplasm. It localises to the perinuclear region. The catalysed reaction is D-glucose(out) = D-glucose(in). Functionally, insulin-regulated facilitative glucose transporter. This is Solute carrier family 2, facilitated glucose transporter member 12 from Xenopus laevis (African clawed frog).